A 260-amino-acid polypeptide reads, in one-letter code: Snake venom serine protease 2 (260 aa).

A signal peptide spans 1 to 18 (MVLIRVLANLLILQLFYA). The propeptide occupies 19-24 (QKSSEL). The 227-residue stretch at 25–251 (IIGGDECNIN…HLDWIKSIIA (227 aa)) folds into the Peptidase S1 domain. 6 disulfide bridges follow: C31-C165, C52-C68, C100-C258, C144-C212, C176-C191, and C202-C227. N123 and N124 each carry an N-linked (GlcNAc...) asparagine glycan.

The protein belongs to the peptidase S1 family. Snake venom subfamily. Monomer. In terms of tissue distribution, expressed by the venom gland.

Its subcellular location is the secreted. In terms of biological role, snake venom serine protease that may act in the hemostasis system of the prey. In Protobothrops flavoviridis (Habu), this protein is Snake venom serine protease 2 (TLF2).